The sequence spans 106 residues: Thiosulfate sulfurtransferase GlpE (106 aa).

Positions 17–105 constitute a Rhodanese domain; sequence SRGEARLVDI…WHRASLPVEA (89 aa). Cys65 acts as the Cysteine persulfide intermediate in catalysis.

This sequence belongs to the GlpE family.

It is found in the cytoplasm. The enzyme catalyses thiosulfate + hydrogen cyanide = thiocyanate + sulfite + 2 H(+). The catalysed reaction is thiosulfate + [thioredoxin]-dithiol = [thioredoxin]-disulfide + hydrogen sulfide + sulfite + 2 H(+). In terms of biological role, transferase that catalyzes the transfer of sulfur from thiosulfate to thiophilic acceptors such as cyanide or dithiols. May function in a CysM-independent thiosulfate assimilation pathway by catalyzing the conversion of thiosulfate to sulfite, which can then be used for L-cysteine biosynthesis. The polypeptide is Thiosulfate sulfurtransferase GlpE (Vibrio vulnificus (strain CMCP6)).